The sequence spans 181 residues: Ninjurin-B (181 aa).

Over residues 1-10 (MDSGEVKISL) the composition is skewed to basic and acidic residues. Residues 1 to 72 (MDSGEVKISL…SNKKCSSDLS (72 aa)) are disordered. Residues 1–115 (MDSGEVKISL…YNDKASTYIY (115 aa)) lie on the Extracellular side of the membrane. A compositionally biased stretch (polar residues) spans 12–26 (DSPSSGESFASTTSG). Over residues 33–49 (RDLDIQVHESHIKDDQF) the composition is skewed to basic and acidic residues. The interval 80-91 (NKNVAEGLMDIA) is helix alpha1. Positions 94–110 (SANANQLRFLITYNDKA) are helix alpha2. Residues 116–136 (SMIMVILSLVLQLLVGIMLIF) traverse the membrane as a helical segment. At 137-153 (KRRLKRFRNRSYERTND) the chain is on the cytoplasmic side. Residues 154-174 (LLVMGVFMITVINILLAAFTT) form a helical membrane-spanning segment. The Extracellular segment spans residues 175–181 (TDGGGSH).

It belongs to the ninjurin family.

It localises to the membrane. Its function is as follows. Effector of non-apoptotic necrotic cell death that mediates plasma membrane rupture (cytolysis): oligomerizes in response to death stimuli and promotes plasma membrane rupture by introducing hydrophilic faces of 2 alpha helices into the hydrophobic membrane, leading to release intracellular molecules that propagate the inflammatory response. Also acts as a homophilic transmembrane adhesion molecule that promotes cell adhesion by mediating homophilic interactions via its extracellular region. This Drosophila melanogaster (Fruit fly) protein is Ninjurin-B.